The chain runs to 90 residues: Secretoglobin family 1D member 1 (90 aa).

Positions 1–21 are cleaved as a signal peptide; the sequence is MRLSVCLLLLTLALCCYRANA.

As to quaternary structure, heterodimer of a lipophilin A and a lipophilin C (mammaglobin B) monomer associated head to head. Expressed in lachrymal gland, thymus, kidney, testis, ovary and salivary gland.

It localises to the secreted. May bind androgens and other steroids, may also bind estramustine, a chemotherapeutic agent used for prostate cancer. May be under transcriptional regulation of steroid hormones. This chain is Secretoglobin family 1D member 1 (SCGB1D1), found in Homo sapiens (Human).